The primary structure comprises 116 residues: Large ribosomal subunit protein bL19 (116 aa).

This sequence belongs to the bacterial ribosomal protein bL19 family.

This protein is located at the 30S-50S ribosomal subunit interface and may play a role in the structure and function of the aminoacyl-tRNA binding site. The polypeptide is Large ribosomal subunit protein bL19 (Pseudomonas putida (strain W619)).